We begin with the raw amino-acid sequence, 111 residues long: Photosystem II reaction center Psb28 protein (111 aa).

It belongs to the Psb28 family. As to quaternary structure, part of the photosystem II complex.

It is found in the cellular thylakoid membrane. The polypeptide is Photosystem II reaction center Psb28 protein (Trichormus variabilis (strain ATCC 29413 / PCC 7937) (Anabaena variabilis)).